Reading from the N-terminus, the 42-residue chain is Photosystem I reaction center subunit IX (42 aa).

The helical transmembrane segment at tyrosine 8–isoleucine 28 threads the bilayer.

It belongs to the PsaJ family.

Its subcellular location is the plastid. The protein localises to the chloroplast thylakoid membrane. Functionally, may help in the organization of the PsaE and PsaF subunits. The chain is Photosystem I reaction center subunit IX from Pyropia yezoensis (Susabi-nori).